Reading from the N-terminus, the 420-residue chain is Phosphoglycerate kinase, cytosolic (420 aa).

Residues valine 23, aspartate 24, phenylalanine 25, asparagine 26, arginine 39, serine 61, histidine 62, glycine 64, arginine 65, arginine 135, histidine 171, and arginine 172 each contribute to the (2R)-3-phosphoglycerate site. ADP is bound by residues glycine 217 and alanine 218. Glycine 217 is a CDP binding site. Positions 218 and 219 each coordinate AMP. Residue alanine 218 coordinates ATP. Residue alanine 218 coordinates Mg(2+). Lysine 219 is a (2R)-3-phosphoglycerate binding site. Aspartate 222 is a binding site for CDP. Aspartate 222 contributes to the Mg(2+) binding site. Residues lysine 223 and glycine 241 each coordinate ADP. Lysine 223 lines the AMP pocket. ATP is bound at residue lysine 223. Glycine 241 lines the CDP pocket. AMP is bound by residues alanine 242 and alanine 314. ATP-binding residues include alanine 242 and alanine 314. The ADP site is built by alanine 314 and asparagine 338. Residues glycine 339 and phenylalanine 344 each contribute to the CDP site. 4 residues coordinate ADP: phenylalanine 344, glutamate 345, glutamate 377, and serine 378. Residue glutamate 345 coordinates AMP. Glutamate 345, glutamate 377, and serine 378 together coordinate ATP. Glutamate 377 contacts Mg(2+).

This sequence belongs to the phosphoglycerate kinase family. Monomer. The cofactor is Mg(2+).

The protein localises to the cytoplasm. The catalysed reaction is (2R)-3-phosphoglycerate + ATP = (2R)-3-phospho-glyceroyl phosphate + ADP. Its pathway is carbohydrate degradation; glycolysis; pyruvate from D-glyceraldehyde 3-phosphate: step 2/5. The chain is Phosphoglycerate kinase, cytosolic from Trypanosoma brucei brucei.